Reading from the N-terminus, the 518-residue chain is Anthranilate synthase component 1 (518 aa).

Residues S38 and 283 to 285 (PYM) each bind L-tryptophan. 324–325 (GT) is a chorismate binding site. E357 is a Mg(2+) binding site. Residues Y445, R465, 479 to 481 (GAG), and G481 each bind chorismate. Position 494 (E494) interacts with Mg(2+).

This sequence belongs to the anthranilate synthase component I family. Heterotetramer consisting of two non-identical subunits: a beta subunit (TrpG) and a large alpha subunit (TrpE). Mg(2+) serves as cofactor.

It carries out the reaction chorismate + L-glutamine = anthranilate + pyruvate + L-glutamate + H(+). It participates in amino-acid biosynthesis; L-tryptophan biosynthesis; L-tryptophan from chorismate: step 1/5. With respect to regulation, feedback inhibited by tryptophan. Its function is as follows. Part of a heterotetrameric complex that catalyzes the two-step biosynthesis of anthranilate, an intermediate in the biosynthesis of L-tryptophan. In the first step, the glutamine-binding beta subunit (TrpG) of anthranilate synthase (AS) provides the glutamine amidotransferase activity which generates ammonia as a substrate that, along with chorismate, is used in the second step, catalyzed by the large alpha subunit of AS (TrpE) to produce anthranilate. In the absence of TrpG, TrpE can synthesize anthranilate directly from chorismate and high concentrations of ammonia. The sequence is that of Anthranilate synthase component 1 (trpE) from Corynebacterium glutamicum (strain ATCC 13032 / DSM 20300 / JCM 1318 / BCRC 11384 / CCUG 27702 / LMG 3730 / NBRC 12168 / NCIMB 10025 / NRRL B-2784 / 534).